The following is a 496-amino-acid chain: NADP-dependent glyceraldehyde-3-phosphate dehydrogenase (496 aa).

Residues Arg-116 and 169 to 170 (NY) each bind substrate. NADP(+)-binding residues include Lys-192, Thr-195, and Asp-230. Position 245-249 (245-249 (GGDTG)) interacts with NAD(+). Glu-264 (proton acceptor) is an active-site residue. Substrate is bound at residue 297-299 (RCT). Cys-298 (nucleophile) is an active-site residue. Glu-391 contacts NADP(+). Residue Ser-404 is modified to Phosphoserine. Arg-451 contacts substrate.

Belongs to the aldehyde dehydrogenase family. In terms of assembly, interacts with 14-3-3 protein when phosphorylated. This interaction is released by divalent cations. Post-translationally, phosphorylated in shoots and non-photosynthetic tissues, but not in leaves.

Its subcellular location is the cytoplasm. It carries out the reaction D-glyceraldehyde 3-phosphate + NADP(+) + H2O = (2R)-3-phosphoglycerate + NADPH + 2 H(+). Insensitive to magnesium or calcium when dephosphorylated. When phosphorylated, 3-fold activation by magnesium or calcium, 2-fold activation by potassium, inhibited by ADP and AMP and insensitive to ATP or PPi. In terms of biological role, important as a means of generating NADPH for biosynthetic reactions. This Triticum aestivum (Wheat) protein is NADP-dependent glyceraldehyde-3-phosphate dehydrogenase (GAPN).